The primary structure comprises 143 residues: MNSIQLIIDIILILWILILTVLYFKRRQLNVDIVKNKKIIRAKRYIVFYVISEYKVKGDDLERVIRNSLKDLLGSVWLNIANPKVVTYREDTQEGIISTNRVGYKAVLASLPFAKEINNNKILIVPRRTTGSLKKAKKLIGLK.

The protein belongs to the eukaryotic/archaeal RNase P protein component 2 family. In terms of assembly, consists of a catalytic RNA component and at least 4-5 protein subunits.

The protein localises to the cytoplasm. The enzyme catalyses Endonucleolytic cleavage of RNA, removing 5'-extranucleotides from tRNA precursor.. Functionally, part of ribonuclease P, a protein complex that generates mature tRNA molecules by cleaving their 5'-ends. The sequence is that of Ribonuclease P protein component 2 from Saccharolobus solfataricus (strain ATCC 35092 / DSM 1617 / JCM 11322 / P2) (Sulfolobus solfataricus).